We begin with the raw amino-acid sequence, 822 residues long: Ras GTPase-activating-like protein rgaA (822 aa).

A disordered region spans residues 1 to 36 (MNKEEYSDISDSESEEVHETNNHNEHEHEEEDDTPE). The span at 15 to 27 (EEVHETNNHNEHE) shows a compositional bias: basic and acidic residues. Residues 104 to 152 (EDKESDWIAEIQELKRNLVSEVRRNHTLERDLNRLDKRIALLIKNRGNI) adopt a coiled-coil conformation. Residues 161 to 822 (GLKAPKHKGD…IHLLNKLFLY (662 aa)) are required for interaction to rac1A. Residues 234–477 (FLLLSLYRLS…GDIKNYLQEI (244 aa)) enclose the Ras-GAP domain.

Heterotetramer. Quaternary complex with activated rac1A, ctxA and ctxB. Interacts directly with rac1A and ctxA. Preferentially interacts with activated forms of rac1A, rac1B and rac1C. Interacts with racE.

The protein resides in the cytoplasm. It is found in the cell cortex. The protein localises to the cleavage furrow. Functionally, part of signaling pathway that is required for completion of cytokinesis. gapA and rgaA control cortexillin localization to the cleavage furrow and hence may be involved in cleavage of the midbody in the final stage of cytokinesis by regulating the actin cytoskeleton. Forms a complex by linking activated rac1A to ctxA. Assembly of this complex is necessary for the recruitment of cortexillin to the midzone of a dividing cell. Overexpression leads to the suppression of the formation of cellular projections containing F-actin and to a defect in cytokinesis. This Dictyostelium discoideum (Social amoeba) protein is Ras GTPase-activating-like protein rgaA (rgaA).